The chain runs to 338 residues: MNILFWGTPAYAVPTLDALHGAGHTIVGVVTQPDRRRGRGKQLVPSPVKARAEELGLPVFTPERIRRDDDCKAKLAALGADASVVVAFGQILPKDVLEQPPLGSWNGHGSLLPRWRGAGPIQWALLEGDQETGVGIMAMEEGLDTGPVLLEQRTPIELLDTSIALAERLSALTAELMVQAMPLIEAAGTGPEDERLAKLNVRVQAEGSTYARMLEKQDFQLDWSASALSIHRKVMGLHPGAFTQLHDKRLKVLRTEPLIERLQDQLSTEGRSLVGQWPTGGHPPGTILAMIEDLGLVVSSSGCPLLIREAQLEGKARSTAPALLQQLKATLGDRFGEV.

110–113 (SLLP) contributes to the (6S)-5,6,7,8-tetrahydrofolate binding site.

Belongs to the Fmt family.

The enzyme catalyses L-methionyl-tRNA(fMet) + (6R)-10-formyltetrahydrofolate = N-formyl-L-methionyl-tRNA(fMet) + (6S)-5,6,7,8-tetrahydrofolate + H(+). Functionally, attaches a formyl group to the free amino group of methionyl-tRNA(fMet). The formyl group appears to play a dual role in the initiator identity of N-formylmethionyl-tRNA by promoting its recognition by IF2 and preventing the misappropriation of this tRNA by the elongation apparatus. The sequence is that of Methionyl-tRNA formyltransferase from Synechococcus sp. (strain CC9605).